We begin with the raw amino-acid sequence, 144 residues long: Oleosin H2 (144 aa).

The residue at position 2 (A2) is an N-acetylalanine. Helical transmembrane passes span 28–48 (VLAVVTLFPLGAVLLCLAGLI), 53–73 (IIGLAVATPLFVIFSPILVPA), and 75–95 (LTIALAVTGFLTSGAFGITAL). Residues 61 to 72 (PLFVIFSPILVP) carry the Proline-knot motif. Residues 124–144 (QETVGQKTREAGQRSQDVIRP) form a disordered region.

It belongs to the oleosin family. In terms of tissue distribution, expressed in seeds (at protein level).

It localises to the lipid droplet. Its subcellular location is the membrane. May have a structural role to stabilize the lipid body during desiccation of the seed by preventing coalescence of the oil. Probably interacts with both lipid and phospholipid moieties of lipid bodies. May also provide recognition signals for specific lipase anchorage in lipolysis during seedling growth. The protein is Oleosin H2 of Sesamum indicum (Oriental sesame).